The chain runs to 478 residues: MTLSFITRWRDELPETYTALSPTPLNNARLIWHNTELANTLSIPSSLFKNAAGVWGGETLLPGMSPLAQVYSGHQFGVWAGQLGDGRGILLGEQLLADGTTMDWHLKGAGLTPYSRMGDGRAVLRSTIRESLASEAMHYLGIPTTRALSIVTSDSPVYRETVEPGAMLIRVAPSHLRFGHFEHFYYRREPEKVRQLADFAIRHYWSHLEDDEDKYRLWFNDVVARTASLIAQWQTVGFAHGVMNTDNMSLLGLTLDYGPFGFLDDYEPGFICNHSDHQGRYSFDNQPAVALWNLQRLAQTLSPFVAVDALNEALDSYQQVLLTHYGQRMRQKLGFMTEQKEDNALLNELFSLMARERSDYTRTFRMLSLTEQHSAASPLRDEFIDRAAFDDWFARYRGRLQQDEVSDSERQQLMQSVNPALVLRNWLAQRAIEAAEKGDMTELHRLHEALRNPFSDRADDYVSRPPDWGKRLEVSCSS.

Residues glycine 84, glycine 86, arginine 87, lysine 107, aspartate 119, glycine 120, arginine 170, and arginine 177 each contribute to the ATP site. Residue aspartate 246 is the Proton acceptor of the active site. Asparagine 247 and aspartate 256 together coordinate Mg(2+). Aspartate 256 is an ATP binding site.

It belongs to the SELO family. Mg(2+) serves as cofactor. Requires Mn(2+) as cofactor.

The enzyme catalyses L-seryl-[protein] + ATP = 3-O-(5'-adenylyl)-L-seryl-[protein] + diphosphate. It catalyses the reaction L-threonyl-[protein] + ATP = 3-O-(5'-adenylyl)-L-threonyl-[protein] + diphosphate. The catalysed reaction is L-tyrosyl-[protein] + ATP = O-(5'-adenylyl)-L-tyrosyl-[protein] + diphosphate. It carries out the reaction L-histidyl-[protein] + UTP = N(tele)-(5'-uridylyl)-L-histidyl-[protein] + diphosphate. The enzyme catalyses L-seryl-[protein] + UTP = O-(5'-uridylyl)-L-seryl-[protein] + diphosphate. It catalyses the reaction L-tyrosyl-[protein] + UTP = O-(5'-uridylyl)-L-tyrosyl-[protein] + diphosphate. Nucleotidyltransferase involved in the post-translational modification of proteins. It can catalyze the addition of adenosine monophosphate (AMP) or uridine monophosphate (UMP) to a protein, resulting in modifications known as AMPylation and UMPylation. This chain is Protein nucleotidyltransferase YdiU, found in Escherichia coli (strain SE11).